Here is a 580-residue protein sequence, read N- to C-terminus: Jasmonoyl--L-amino acid synthetase JAR6 (580 aa).

Serine 100 is an ATP binding site. Serine 103 lines the jasmonate pocket. Residues methionine 120, threonine 123, glycine 164, asparagine 169, and 332-337 contribute to the ATP site; that span reads GSSEGW. 167–171 is a binding site for an L-alpha-amino acid; it reads TTNVY. Residue 329–332 coordinates jasmonate; sequence ADYG. 534-538 contacts an L-alpha-amino acid; the sequence is KILDH.

Belongs to the IAA-amido conjugating enzyme family.

It catalyses the reaction a jasmonate + an L-alpha-amino acid + ATP = a jasmonyl-L-amino acid + AMP + diphosphate + H(+). In terms of biological role, catalyzes the synthesis of jasmonate-amino acid conjugates by adenylation. Catalyzes the conjugation of jasmonate (JA) to Ile, Leu and Val. Catalyzes the conjugation of JA to Ile that may mediate defense signaling and resistance to the herbivore Manduca sexta caterpillars. This Nicotiana attenuata (Coyote tobacco) protein is Jasmonoyl--L-amino acid synthetase JAR6 (JAR6).